A 121-amino-acid polypeptide reads, in one-letter code: U15-barytoxin-Tl1a (121 aa).

The first 17 residues, 1-17, serve as a signal peptide directing secretion; it reads MKLSVIVLVASFGFAVA. Cystine bridges form between Cys-56/Cys-74, Cys-67/Cys-80, Cys-71/Cys-119, and Cys-73/Cys-90.

The protein belongs to the neurotoxin 03 (Tx2) family. 03 subfamily. Expressed by the venom gland.

The protein localises to the secreted. Functionally, ion channel inhibitor. This is U15-barytoxin-Tl1a from Trittame loki (Brush-footed trapdoor spider).